The following is a 295-amino-acid chain: Pyridoxal 5'-phosphate synthase subunit PdxS (295 aa).

Position 25 (Asp-25) interacts with D-ribose 5-phosphate. The active-site Schiff-base intermediate with D-ribose 5-phosphate is Lys-82. Position 154 (Gly-154) interacts with D-ribose 5-phosphate. Arg-166 contributes to the D-glyceraldehyde 3-phosphate binding site. D-ribose 5-phosphate contacts are provided by residues Gly-215 and 236 to 237; that span reads GS.

This sequence belongs to the PdxS/SNZ family. In the presence of PdxT, forms a dodecamer of heterodimers.

It carries out the reaction aldehydo-D-ribose 5-phosphate + D-glyceraldehyde 3-phosphate + L-glutamine = pyridoxal 5'-phosphate + L-glutamate + phosphate + 3 H2O + H(+). It functions in the pathway cofactor biosynthesis; pyridoxal 5'-phosphate biosynthesis. Its function is as follows. Catalyzes the formation of pyridoxal 5'-phosphate from ribose 5-phosphate (RBP), glyceraldehyde 3-phosphate (G3P) and ammonia. The ammonia is provided by the PdxT subunit. Can also use ribulose 5-phosphate and dihydroxyacetone phosphate as substrates, resulting from enzyme-catalyzed isomerization of RBP and G3P, respectively. In Bacillus cereus (strain Q1), this protein is Pyridoxal 5'-phosphate synthase subunit PdxS.